We begin with the raw amino-acid sequence, 485 residues long: Glutamate--tRNA ligase (485 aa).

Residue Arg-6 coordinates L-glutamate. Residues 9–19 (PSPTGNLHIGT) carry the 'HIGH' region motif. L-glutamate contacts are provided by residues Tyr-192 and 210–214 (RGEDH). The 'KMSKS' region signature appears at 248 to 252 (KLSKR). Residue Lys-251 coordinates ATP.

The protein belongs to the class-I aminoacyl-tRNA synthetase family. Glutamate--tRNA ligase type 1 subfamily. As to quaternary structure, monomer. Does not require zinc. serves as cofactor.

It localises to the cytoplasm. The enzyme catalyses tRNA(Glu) + L-glutamate + ATP = L-glutamyl-tRNA(Glu) + AMP + diphosphate. In terms of biological role, non-discriminating glutamyl-tRNA synthetase. Catalyzes the attachment of glutamate to tRNA(Glu) in a two-step reaction: glutamate is first activated by ATP to form Glu-AMP and then transferred to the acceptor end of tRNA(Glu). Acylates both tRNA(Glu) and tRNA(Gln) with glutamate, but has 13-fold higher efficiency with tRNA(Glu). In Thermosynechococcus vestitus (strain NIES-2133 / IAM M-273 / BP-1), this protein is Glutamate--tRNA ligase (gltX).